A 1139-amino-acid polypeptide reads, in one-letter code: GRIP and coiled-coil domain-containing protein (1139 aa).

The segment at 366–388 (NDDSQINNNVSNKVNSPDDDPNT) is disordered. Over residues 369–380 (SQINNNVSNKVN) the composition is skewed to polar residues. Coiled coils occupy residues 472 to 648 (VTKL…INNE) and 758 to 877 (LYIL…ETQQ). Positions 1004–1024 (NEQENDNNNNNNNNNNNNNVE) are disordered. Positions 1009 to 1022 (DNNNNNNNNNNNNN) are enriched in low complexity. Residues 1043–1084 (YKKIRKKLETYEILLNEQQEGKKKMTEEINSLKNQVKNYESI) adopt a coiled-coil conformation. A GRIP domain is found at 1084 to 1135 (INGNYQHIIYQKNILSNFIAQIPSRIQVDDYVSVIFNSFNFSNQEIEAINIK).

This Plasmodium falciparum (isolate 3D7) protein is GRIP and coiled-coil domain-containing protein.